The chain runs to 217 residues: Small ribosomal subunit protein uS3c (217 aa).

The KH type-2 domain maps to 47-119 (VRTHIKSSSN…KLHIAIEKVA (73 aa)).

Belongs to the universal ribosomal protein uS3 family. As to quaternary structure, part of the 30S ribosomal subunit.

It is found in the plastid. It localises to the chloroplast. This Pinus koraiensis (Korean pine) protein is Small ribosomal subunit protein uS3c (rps3).